A 133-amino-acid polypeptide reads, in one-letter code: uncharacterized protein (133 aa).

2 consecutive transmembrane segments (helical) span residues 8–28 and 46–66; these read MVLL…LLLL and SFSI…SIGA.

It localises to the membrane. This is an uncharacterized protein from Saccharomyces cerevisiae (strain ATCC 204508 / S288c) (Baker's yeast).